We begin with the raw amino-acid sequence, 160 residues long: Probable chemoreceptor glutamine deamidase CheD (160 aa).

This sequence belongs to the CheD family.

It catalyses the reaction L-glutaminyl-[protein] + H2O = L-glutamyl-[protein] + NH4(+). In terms of biological role, probably deamidates glutamine residues to glutamate on methyl-accepting chemotaxis receptors (MCPs), playing an important role in chemotaxis. The protein is Probable chemoreceptor glutamine deamidase CheD of Desulfitobacterium hafniense (strain DSM 10664 / DCB-2).